We begin with the raw amino-acid sequence, 456 residues long: tRNA modification GTPase MnmE (456 aa).

(6S)-5-formyl-5,6,7,8-tetrahydrofolate is bound by residues Arg-24, Glu-81, and Lys-120. In terms of domain architecture, TrmE-type G spans 216–379 (GMTVVIAGRP…LRDHLKACMG (164 aa)). Asn-226 contacts K(+). GTP contacts are provided by residues 226-231 (NAGKSS), 245-251 (TDIAGTT), 270-273 (DTAG), and 335-338 (NKAD). Ser-230 lines the Mg(2+) pocket. The K(+) site is built by Thr-245, Ile-247, and Thr-250. A Mg(2+)-binding site is contributed by Thr-251. Residue Lys-456 coordinates (6S)-5-formyl-5,6,7,8-tetrahydrofolate.

The protein belongs to the TRAFAC class TrmE-Era-EngA-EngB-Septin-like GTPase superfamily. TrmE GTPase family. Homodimer. Heterotetramer of two MnmE and two MnmG subunits. K(+) serves as cofactor.

It is found in the cytoplasm. Its function is as follows. Exhibits a very high intrinsic GTPase hydrolysis rate. Involved in the addition of a carboxymethylaminomethyl (cmnm) group at the wobble position (U34) of certain tRNAs, forming tRNA-cmnm(5)s(2)U34. The polypeptide is tRNA modification GTPase MnmE (Pseudomonas fluorescens (strain ATCC BAA-477 / NRRL B-23932 / Pf-5)).